A 132-amino-acid chain; its full sequence is MDVTRLLLATLLVFLCFFTANSHLPPEEKLRDDRSLRSNSSVNLLDFPSVSIVALNKKSKQIGRKEAEKKRSSKKEASMKKVARPRTPLSAPCVATRNSCKPPAPACCDPCASCQCRFFRSACSCRVLSLNC.

A signal peptide spans 1 to 22 (MDVTRLLLATLLVFLCFFTANS). N-linked (GlcNAc...) asparagine glycosylation is present at Asn-39. The disordered stretch occupies residues 61-87 (QIGRKEAEKKRSSKKEASMKKVARPRT). The span at 63 to 79 (GRKEAEKKRSSKKEASM) shows a compositional bias: basic and acidic residues. 5 disulfides stabilise this stretch: Cys-93/Cys-108, Cys-100/Cys-114, Cys-107/Cys-125, Cys-111/Cys-132, and Cys-116/Cys-123. The 40-residue stretch at 93-132 (CVATRNSCKPPAPACCDPCASCQCRFFRSACSCRVLSLNC) folds into the Agouti domain.

The protein resides in the secreted. Functionally, involved in the regulation of melanogenesis. The binding of ASP to MC1R precludes alpha-MSH initiated signaling and thus blocks production of cAMP, leading to a down-regulation of eumelanogenesis (brown/black pigment) and thus increasing synthesis of pheomelanin (yellow/red pigment). In Gorilla gorilla gorilla (Western lowland gorilla), this protein is Agouti-signaling protein (ASIP).